The primary structure comprises 351 residues: Nicotinate-nucleotide--dimethylbenzimidazole phosphoribosyltransferase (351 aa).

The Proton acceptor role is filled by Glu-317.

This sequence belongs to the CobT family.

The catalysed reaction is 5,6-dimethylbenzimidazole + nicotinate beta-D-ribonucleotide = alpha-ribazole 5'-phosphate + nicotinate + H(+). It participates in nucleoside biosynthesis; alpha-ribazole biosynthesis; alpha-ribazole from 5,6-dimethylbenzimidazole: step 1/2. Functionally, catalyzes the synthesis of alpha-ribazole-5'-phosphate from nicotinate mononucleotide (NAMN) and 5,6-dimethylbenzimidazole (DMB). The chain is Nicotinate-nucleotide--dimethylbenzimidazole phosphoribosyltransferase from Pseudomonas fluorescens (strain SBW25).